The sequence spans 438 residues: Methionine aminopeptidase 2 (438 aa).

Residues M1–G89 form a disordered region. Residues E10–K20 are compositionally biased toward basic and acidic residues. Positions A51 to A65 are enriched in basic residues. H191 is a substrate binding site. 3 residues coordinate a divalent metal cation: D211, D222, and H291. Position 299 (H299) interacts with substrate. Positions 324 and 419 each coordinate a divalent metal cation.

It belongs to the peptidase M24A family. Methionine aminopeptidase eukaryotic type 2 subfamily. The cofactor is Co(2+). It depends on Zn(2+) as a cofactor. Mn(2+) is required as a cofactor. Requires Fe(2+) as cofactor.

The protein resides in the cytoplasm. The catalysed reaction is Release of N-terminal amino acids, preferentially methionine, from peptides and arylamides.. In terms of biological role, cotranslationally removes the N-terminal methionine from nascent proteins. The N-terminal methionine is often cleaved when the second residue in the primary sequence is small and uncharged (Met-Ala-, Cys, Gly, Pro, Ser, Thr, or Val). This is Methionine aminopeptidase 2 from Sordaria macrospora (strain ATCC MYA-333 / DSM 997 / K(L3346) / K-hell).